Consider the following 288-residue polypeptide: Syntaxin-1A (288 aa).

The segment covering 1–13 has biased composition (basic and acidic residues); that stretch reads MKDRTQELRTAKD. Residues 1 to 20 form a disordered region; sequence MKDRTQELRTAKDSDDDDDV. The Cytoplasmic portion of the chain corresponds to 1–265; the sequence is MKDRTQELRT…KYQSKARRKK (265 aa). A phosphoserine mark is found at Ser14, Ser64, and Ser95. A coiled-coil region spans residues 68 to 109; sequence DEKTKEELEELMSDIKKTANKVRSKLKSIEQSIEQEEGLNRS. Ser188 carries the post-translational modification Phosphoserine; by DAPK1. A t-SNARE coiled-coil homology domain is found at 192 to 254; sequence LSEIETRHSE…ERAVSDTKKA (63 aa). Glycyl lysine isopeptide (Lys-Gly) (interchain with G-Cter in SUMO) cross-links involve residues Lys252, Lys253, and Lys256. A helical; Anchor for type IV membrane protein membrane pass occupies residues 266-286; sequence IMIIICCVILGIIIASTIGGI. Residues 287 to 288 lie on the Extracellular side of the membrane; the sequence is FG.

Belongs to the syntaxin family. Part of the SNARE core complex containing SNAP25, VAMP2 and STX1A; this complex constitutes the basic catalytic machinery of the complex neurotransmitter release apparatus. The SNARE complex interacts with CPLX1. Interacts with STXBP1. The interaction with STXBP1 promotes assembly of the SNARE complex. Interacts (via C-terminus) with KCNB1 (via C-terminus); the interaction increases in a calcium-dependent manner and induces a pore-independent enhancement of exocytosis in neuroendocrine cells, chromaffin cells, pancreatic beta cells and from the soma of dorsal root ganglia (DRG) neurons. Interacts with SYTL4. Interacts with STXBP6. Interacts with PLCL1 (via C2 domain). Interacts with OTOF. Interacts with LGI3. Interacts (via the H3 domain) with SLC6A4 (via the N-terminus); this interaction regulates SLC4A6 channel conductance in thalamocortical neurons. Interacts with SYT6 and SYT8; the interaction is Ca(2+)-dependent. Interacts with VAMP8. Interacts with SNAP23. Interacts with VAPA and SYBU. Interacts with PRRT2. Interacts with SEPT8. Interacts with STXBP5L. Interacts with synaptotagmin-1/SYT1. Interacts with SEPTIN5; in the cerebellar cortex. Interacts with SEPTIN4; in the striatum. In terms of processing, phosphorylated by CK2. Phosphorylation at Ser-188 by DAPK1 significantly decreases its interaction with STXBP1. Post-translationally, phosphorylated by CK2. Phosphorylation at Ser-188 by DAPK1 significantly decreases its interaction with STXBP1. Sumoylated, sumoylation is required for regulation of synaptic vesicle endocytosis. In terms of tissue distribution, expressed in the striatum (at protein level). Expressed in the ileum.

The protein localises to the cytoplasmic vesicle. Its subcellular location is the secretory vesicle. It localises to the synaptic vesicle membrane. The protein resides in the synapse. It is found in the synaptosome. The protein localises to the cell membrane. Plays an essential role in hormone and neurotransmitter calcium-dependent exocytosis and endocytosis. Part of the SNARE (Soluble NSF Attachment Receptor) complex composed of SNAP25, STX1A and VAMP2 which mediates the fusion of synaptic vesicles with the presynaptic plasma membrane. STX1A and SNAP25 are localized on the plasma membrane while VAMP2 resides in synaptic vesicles. The pairing of the three SNAREs from the N-terminal SNARE motifs to the C-terminal anchors leads to the formation of the SNARE complex, which brings membranes into close proximity and results in final fusion. Participates in the calcium-dependent regulation of acrosomal exocytosis in sperm. Also plays an important role in the exocytosis of hormones such as insulin or glucagon-like peptide 1 (GLP-1). The chain is Syntaxin-1A (Stx1a) from Mus musculus (Mouse).